Consider the following 389-residue polypeptide: Aspartate aminotransferase (389 aa).

2 residues coordinate L-aspartate: G34 and N171. K233 carries the post-translational modification N6-(pyridoxal phosphate)lysine. R362 is a binding site for L-aspartate.

Belongs to the class-I pyridoxal-phosphate-dependent aminotransferase family. Homodimer. Requires pyridoxal 5'-phosphate as cofactor.

The protein resides in the cytoplasm. The enzyme catalyses L-aspartate + 2-oxoglutarate = oxaloacetate + L-glutamate. This is Aspartate aminotransferase (aspC) from Pyrococcus abyssi (strain GE5 / Orsay).